The primary structure comprises 306 residues: Aspartate carbamoyltransferase catalytic subunit (306 aa).

Carbamoyl phosphate is bound by residues arginine 51 and threonine 52. L-aspartate is bound at residue lysine 79. Carbamoyl phosphate-binding residues include arginine 101, histidine 130, and glutamine 133. L-aspartate is bound by residues arginine 163 and arginine 215. Carbamoyl phosphate-binding residues include glycine 256 and proline 257.

It belongs to the aspartate/ornithine carbamoyltransferase superfamily. ATCase family. As to quaternary structure, heterododecamer (2C3:3R2) of six catalytic PyrB chains organized as two trimers (C3), and six regulatory PyrI chains organized as three dimers (R2).

The catalysed reaction is carbamoyl phosphate + L-aspartate = N-carbamoyl-L-aspartate + phosphate + H(+). Its pathway is pyrimidine metabolism; UMP biosynthesis via de novo pathway; (S)-dihydroorotate from bicarbonate: step 2/3. Catalyzes the condensation of carbamoyl phosphate and aspartate to form carbamoyl aspartate and inorganic phosphate, the committed step in the de novo pyrimidine nucleotide biosynthesis pathway. The chain is Aspartate carbamoyltransferase catalytic subunit from Ehrlichia ruminantium (strain Welgevonden).